Reading from the N-terminus, the 452-residue chain is Coiled-coil domain-containing protein 71 (452 aa).

The segment at 81–106 (PSQTKLQARAPTPAATSPPASAPQTA) is disordered. A compositionally biased stretch (low complexity) spans 87-106 (QARAPTPAATSPPASAPQTA). Ser-129 is subject to Phosphoserine. Disordered stretches follow at residues 209–256 (PLKV…GLQS) and 322–404 (AREV…LGPG). The stretch at 279–344 (KAAQAKAACA…QAKAKVARTQ (66 aa)) forms a coiled coil. The segment covering 332-344 (KAVQAKAKVARTQ) has biased composition (low complexity). Basic and acidic residues predominate over residues 377–386 (RTEEAKDLSP).

In Bos taurus (Bovine), this protein is Coiled-coil domain-containing protein 71 (CCDC71).